A 606-amino-acid polypeptide reads, in one-letter code: Transcription factor glial cells missing 2 (606 aa).

Residues 20 to 37 are compositionally biased toward polar residues; the sequence is DHSQLTQFVQPQSQSTHS. Disordered stretches follow at residues 20–65, 475–501, and 561–606; these read DHSQ…KGKR, EMQQ…HHYY, and TAPT…SVTH. Low complexity predominate over residues 44–61; sequence PGQQQAGGSMTMPSSSTG. Residues 65–224 constitute a DNA-binding region (GCM); sequence REWDINDAIV…KNSSVSKRAF (160 aa). The segment covering 490-501 has biased composition (polar residues); sequence FGGNQTAGHHYY. Residues 569–580 show a composition bias toward pro residues; the sequence is PGHPPPPPPPPT. Positions 583–593 are enriched in basic residues; the sequence is YHHHHHHHLHH. The segment covering 594 to 606 has biased composition (low complexity); the sequence is PAAATGLAPSVTH.

In terms of tissue distribution, expressed in glial lineages within embryonic procephalic mesoderm. Expression is highest in hemocyte primordia and longitudinal and nerve root ganglia.

It is found in the nucleus. Functionally, transcription factor with a minor role promoting glial cell differentiation and a more significant role in hematocyte differentiation. Gcm2, together with gcm, is required for the proliferation of plasmatocyte precursors, the expression of Croquemort protein, and the ability of plasmatocytes to convert into macrophages. This is Transcription factor glial cells missing 2 (gcm2) from Drosophila melanogaster (Fruit fly).